A 463-amino-acid chain; its full sequence is Glycine--tRNA ligase (463 aa).

Residues R100 and E175 each coordinate substrate. ATP is bound by residues R207 to E209, F217 to F222, E291 to L292, and G335 to R338. F222–E226 serves as a coordination point for substrate. E331–G335 lines the substrate pocket.

It belongs to the class-II aminoacyl-tRNA synthetase family. As to quaternary structure, homodimer.

The protein localises to the cytoplasm. It carries out the reaction tRNA(Gly) + glycine + ATP = glycyl-tRNA(Gly) + AMP + diphosphate. Its function is as follows. Catalyzes the attachment of glycine to tRNA(Gly). This chain is Glycine--tRNA ligase, found in Clostridium beijerinckii (strain ATCC 51743 / NCIMB 8052) (Clostridium acetobutylicum).